A 372-amino-acid chain; its full sequence is Glutamate 5-kinase (372 aa).

Lys-14 provides a ligand contact to ATP. Residues Ser-54, Asp-141, and Asn-153 each coordinate substrate. Position 173–174 (173–174 (TD)) interacts with ATP. The 79-residue stretch at 280–358 (RGHVVIDAGA…GEIEIVLGYM (79 aa)) folds into the PUA domain.

Belongs to the glutamate 5-kinase family.

The protein resides in the cytoplasm. It catalyses the reaction L-glutamate + ATP = L-glutamyl 5-phosphate + ADP. Its pathway is amino-acid biosynthesis; L-proline biosynthesis; L-glutamate 5-semialdehyde from L-glutamate: step 1/2. In terms of biological role, catalyzes the transfer of a phosphate group to glutamate to form L-glutamate 5-phosphate. The polypeptide is Glutamate 5-kinase (Burkholderia orbicola (strain MC0-3)).